A 419-amino-acid chain; its full sequence is Serine--tRNA ligase (419 aa).

225-227 (TAE) provides a ligand contact to L-serine. 256-258 (RKE) is a binding site for ATP. An L-serine-binding site is contributed by Glu-279. An ATP-binding site is contributed by 343-346 (EISS). Ser-378 is a binding site for L-serine.

Belongs to the class-II aminoacyl-tRNA synthetase family. Type-1 seryl-tRNA synthetase subfamily. In terms of assembly, homodimer. The tRNA molecule binds across the dimer.

Its subcellular location is the cytoplasm. It carries out the reaction tRNA(Ser) + L-serine + ATP = L-seryl-tRNA(Ser) + AMP + diphosphate + H(+). It catalyses the reaction tRNA(Sec) + L-serine + ATP = L-seryl-tRNA(Sec) + AMP + diphosphate + H(+). It functions in the pathway aminoacyl-tRNA biosynthesis; selenocysteinyl-tRNA(Sec) biosynthesis; L-seryl-tRNA(Sec) from L-serine and tRNA(Sec): step 1/1. In terms of biological role, catalyzes the attachment of serine to tRNA(Ser). Is also able to aminoacylate tRNA(Sec) with serine, to form the misacylated tRNA L-seryl-tRNA(Sec), which will be further converted into selenocysteinyl-tRNA(Sec). The sequence is that of Serine--tRNA ligase from Pelagibacter ubique (strain HTCC1062).